We begin with the raw amino-acid sequence, 81 residues long: uncharacterized protein (81 aa).

Positions 1–31 are cleaved as a signal peptide; that stretch reads MRYNSFLSVLALFNVLLWFTFILAISMTFSA. The chain crosses the membrane as a helical span at residues 52-74; it reads WFFVLLPYVIGLFFAIFDSATIG.

It localises to the membrane. This is an uncharacterized protein from Pasteurella multocida (strain Pm70).